Consider the following 1429-residue polypeptide: Dicer-like protein 2 (1429 aa).

Positions 21–200 (MFEASLKGNI…TIEMNLNSVC (180 aa)) constitute a Helicase ATP-binding domain. An ATP-binding site is contributed by 34 to 41 (MGTGSGKT). Positions 141-144 (DEAH) match the DEAH box motif. The 167-residue stretch at 335–501 (ALISFLMSTE…EDRRRTEELR (167 aa)) folds into the Helicase C-terminal domain. Positions 528 to 622 (AMQHLVHFCD…LPLTKSREFT (95 aa)) constitute a Dicer dsRNA-binding fold domain. RNase III domains lie at 874–1014 (ATRL…IDGG) and 1056–1250 (QENL…VDSG). Positions 1095, 1236, and 1239 each coordinate Mg(2+).

The protein belongs to the helicase family. Dicer subfamily. Mg(2+) serves as cofactor. The cofactor is Mn(2+).

Dicer-like endonuclease involved in cleaving double-stranded RNA in the RNA interference (RNAi) pathway. Produces 21 to 25 bp dsRNAs (siRNAs) which target the selective destruction of homologous RNAs leading to sequence-specific suppression of gene expression, called post-transcriptional gene silencing (PTGS). Part of a broad host defense response against viral infection and transposons. The sequence is that of Dicer-like protein 2 (dcl2) from Emericella nidulans (strain FGSC A4 / ATCC 38163 / CBS 112.46 / NRRL 194 / M139) (Aspergillus nidulans).